A 452-amino-acid polypeptide reads, in one-letter code: Tol-Pal system protein TolB (452 aa).

The N-terminal stretch at 1–31 is a signal peptide; sequence MCGVRRGMGVLLLFCAVALCAMPFVVRSVWG.

Belongs to the TolB family. The Tol-Pal system is composed of five core proteins: the inner membrane proteins TolA, TolQ and TolR, the periplasmic protein TolB and the outer membrane protein Pal. They form a network linking the inner and outer membranes and the peptidoglycan layer.

It is found in the periplasm. Functionally, part of the Tol-Pal system, which plays a role in outer membrane invagination during cell division and is important for maintaining outer membrane integrity. In Syntrophus aciditrophicus (strain SB), this protein is Tol-Pal system protein TolB.